The sequence spans 82 residues: Penaeidin-3e (82 aa).

A signal peptide spans 1 to 19; that stretch reads MRLVVCLVFLAPFALVCHG. Pyrrolidone carboxylic acid is present on Q20. Disulfide bonds link C51-C66, C55-C73, and C67-C74. A Serine amide modification is found at S81.

This sequence belongs to the penaeidin family.

The protein localises to the cytoplasmic granule. Antibacterial and antifungal activity. Presents chitin-binding activity. In Penaeus vannamei (Whiteleg shrimp), this protein is Penaeidin-3e.